The sequence spans 239 residues: 1-(5-phosphoribosyl)-5-[(5-phosphoribosylamino)methylideneamino] imidazole-4-carboxamide isomerase (239 aa).

Asp-8 (proton acceptor) is an active-site residue. Residue Asp-130 is the Proton donor of the active site.

Belongs to the HisA/HisF family.

The protein localises to the cytoplasm. It catalyses the reaction 1-(5-phospho-beta-D-ribosyl)-5-[(5-phospho-beta-D-ribosylamino)methylideneamino]imidazole-4-carboxamide = 5-[(5-phospho-1-deoxy-D-ribulos-1-ylimino)methylamino]-1-(5-phospho-beta-D-ribosyl)imidazole-4-carboxamide. It functions in the pathway amino-acid biosynthesis; L-histidine biosynthesis; L-histidine from 5-phospho-alpha-D-ribose 1-diphosphate: step 4/9. This is 1-(5-phosphoribosyl)-5-[(5-phosphoribosylamino)methylideneamino] imidazole-4-carboxamide isomerase from Lachnoclostridium phytofermentans (strain ATCC 700394 / DSM 18823 / ISDg) (Clostridium phytofermentans).